Here is a 232-residue protein sequence, read N- to C-terminus: Putative ABC transporter ATP-binding protein VNG_2317G (232 aa).

Residues 2–231 (LSVRNLVHRY…GALPDAGVRP (230 aa)) enclose the ABC transporter domain. An ATP-binding site is contributed by 34-41 (GANGSGKT).

This sequence belongs to the ABC transporter superfamily.

Its subcellular location is the cell membrane. In terms of biological role, probably part of an ABC transporter complex. Responsible for energy coupling to the transport system. The protein is Putative ABC transporter ATP-binding protein VNG_2317G of Halobacterium salinarum (strain ATCC 700922 / JCM 11081 / NRC-1) (Halobacterium halobium).